Consider the following 294-residue polypeptide: Nucleotide-binding protein CLK_2809 (294 aa).

8 to 15 (GLSGAGKT) serves as a coordination point for ATP. 59–62 (DIRG) serves as a coordination point for GTP.

This sequence belongs to the RapZ-like family.

Functionally, displays ATPase and GTPase activities. This is Nucleotide-binding protein CLK_2809 from Clostridium botulinum (strain Loch Maree / Type A3).